Reading from the N-terminus, the 307-residue chain is Protein pid-3 (307 aa).

Component of the pid-1 variant of the PETISCO complex (also called the pid-3, erh-2, tofu-6, and ife-3 small RNA complex) containing at least pid-1, tofu-6, ife-3, pid-3, and erh-2, which is required for the biogenesis of a class of 21 nucleotide PIWI-interacting RNAs (piRNAs) that possess a uracil residue at the 5'-end (also called 21U-RNAs). Within the complex interacts with pid-1; the interaction is direct. Component of the tost-1 variant of the PETISCO complex (also called the pid-3, erh-2, tofu-6, and ife-3 small RNA complex) containing at least tost-1, tofu-6, ife-3, pid-3, and erh-2, which plays an essential role in embryogenesis. Within the complex interacts with tost-1. Within the pid-1 and tost-1 variants of the PETISCO complexes interacts with tofu-6 (via the RRM domain) and erh-2. In contrast to the pid-1 variant of the PETISCO complex, the tost-1 variant of the PETISCO complex plays a minor role in the biogenesis of 21U-RNAs. As to expression, expressed in the germline (at protein level).

The protein localises to the cytoplasm. It localises to the perinuclear region. The protein resides in the nucleus. Functionally, component of the pid-1 and tost-1 variants of the PETISCO complexes, which have roles in the biogenesis of a class of 21 nucleotide PIWI-interacting RNAs (piRNAs) that possess a uracil residue at the 5'-end (also called 21U-RNAs) and embryogenesis, respectively. Within the pid-1 variant of the PETISCO complex may stabilize 21U-RNA precursor molecules. Promotes the biogenesis of 21U-RNAs. Required for chromosome segregation and cell division in early embryos. This chain is Protein pid-3, found in Caenorhabditis elegans.